We begin with the raw amino-acid sequence, 212 residues long: Secreted and transmembrane protein 1b (212 aa).

An N-terminal signal peptide occupies residues 1–28; the sequence is MLAYSVTSSGLFPRMLWALLLLAASLNA. At 29 to 160 the chain is on the extracellular side; sequence HNDVWDEPCC…DKPPTAVRTE (132 aa). A disulfide bridge links C38 with C55. Residues N56, N85, N114, and N130 are each glycosylated (N-linked (GlcNAc...) asparagine). Residues 161 to 181 form a helical membrane-spanning segment; that stretch reads VIIIIAIATTIIITGIGVFVW. The Cytoplasmic segment spans residues 182 to 212; the sequence is YKQFPVAPQIQMSVPCLIHGSPGIPYLTLPP.

Belongs to the SECTM family. Interacts with CD7.

The protein resides in the cell membrane. Its subcellular location is the secreted. Its function is as follows. May be involved in thymocyte signaling. The protein is Secreted and transmembrane protein 1b (Sectm1b) of Mus musculus (Mouse).